A 347-amino-acid polypeptide reads, in one-letter code: Phosphate acyltransferase (347 aa).

The protein belongs to the PlsX family. Homodimer. Probably interacts with PlsY.

Its subcellular location is the cytoplasm. The enzyme catalyses a fatty acyl-[ACP] + phosphate = an acyl phosphate + holo-[ACP]. It functions in the pathway lipid metabolism; phospholipid metabolism. Its function is as follows. Catalyzes the reversible formation of acyl-phosphate (acyl-PO(4)) from acyl-[acyl-carrier-protein] (acyl-ACP). This enzyme utilizes acyl-ACP as fatty acyl donor, but not acyl-CoA. The protein is Phosphate acyltransferase of Rhizobium meliloti (strain 1021) (Ensifer meliloti).